Reading from the N-terminus, the 582-residue chain is Aspartate--tRNA ligase (582 aa).

Glu174 contacts L-aspartate. The segment at 198-201 (QITK) is aspartate. Arg220 contributes to the L-aspartate binding site. ATP-binding positions include 220-222 (RDE) and Gln229. L-aspartate is bound at residue His443. Residue Glu477 participates in ATP binding. Arg484 contributes to the L-aspartate binding site. 529–532 (GLDR) is a binding site for ATP.

It belongs to the class-II aminoacyl-tRNA synthetase family. Type 1 subfamily. Homodimer.

It localises to the cytoplasm. The enzyme catalyses tRNA(Asp) + L-aspartate + ATP = L-aspartyl-tRNA(Asp) + AMP + diphosphate. Its function is as follows. Catalyzes the attachment of L-aspartate to tRNA(Asp) in a two-step reaction: L-aspartate is first activated by ATP to form Asp-AMP and then transferred to the acceptor end of tRNA(Asp). In Streptococcus pyogenes serotype M1, this protein is Aspartate--tRNA ligase.